The sequence spans 358 residues: Heme A synthase (358 aa).

The next 8 helical transmembrane spans lie at I22 to A42, V107 to K127, I133 to W153, L172 to G192, F208 to G228, F269 to V289, A302 to H322, and V324 to V344. H271 contacts heme. Heme is bound at residue H332.

It belongs to the COX15/CtaA family. Type 2 subfamily. Interacts with CtaB. The cofactor is heme b.

The protein localises to the cell membrane. It catalyses the reaction Fe(II)-heme o + 2 A + H2O = Fe(II)-heme a + 2 AH2. The protein operates within porphyrin-containing compound metabolism; heme A biosynthesis; heme A from heme O: step 1/1. Functionally, catalyzes the conversion of heme O to heme A by two successive hydroxylations of the methyl group at C8. The first hydroxylation forms heme I, the second hydroxylation results in an unstable dihydroxymethyl group, which spontaneously dehydrates, resulting in the formyl group of heme A. This chain is Heme A synthase, found in Bartonella tribocorum (strain CIP 105476 / IBS 506).